A 277-amino-acid polypeptide reads, in one-letter code: Large ribosomal subunit protein uL2 (277 aa).

The interval 222–277 is disordered; that stretch reads GVAMNPVDHPHGGGEGRTSGGRHPVTPWGKPTKGKKTRSNKATDKFIMRSRHQRKK.

This sequence belongs to the universal ribosomal protein uL2 family. Part of the 50S ribosomal subunit. Forms a bridge to the 30S subunit in the 70S ribosome.

One of the primary rRNA binding proteins. Required for association of the 30S and 50S subunits to form the 70S ribosome, for tRNA binding and peptide bond formation. It has been suggested to have peptidyltransferase activity; this is somewhat controversial. Makes several contacts with the 16S rRNA in the 70S ribosome. This is Large ribosomal subunit protein uL2 from Brucella canis (strain ATCC 23365 / NCTC 10854 / RM-666).